A 619-amino-acid polypeptide reads, in one-letter code: ATP-dependent zinc metalloprotease FtsH (619 aa).

Topologically, residues 1–11 are cytoplasmic; the sequence is MDKQSKFRIKT. A helical transmembrane segment spans residues 12 to 32; it reads FFKKIIFFLIIFCFFYFFNFI. Over 33 to 131 the chain is Periplasmic; that stretch reads KKTKKITHTT…FKNYKIYTVL (99 aa). The chain crosses the membrane as a helical span at residues 132-152; that stretch reads NFFYDYGFFLMIIIICWIFIF. Over 153 to 619 the chain is Cytoplasmic; it reads RKIASRSSES…FKEDFASILD (467 aa). 224–231 serves as a coordination point for ATP; the sequence is GPPGTGKT. Zn(2+) is bound at residue His-447. Glu-448 is an active-site residue. 2 residues coordinate Zn(2+): His-451 and Asp-522.

It in the central section; belongs to the AAA ATPase family. The protein in the C-terminal section; belongs to the peptidase M41 family. In terms of assembly, homohexamer. Zn(2+) serves as cofactor.

The protein resides in the cell inner membrane. Acts as a processive, ATP-dependent zinc metallopeptidase for both cytoplasmic and membrane proteins. Plays a role in the quality control of integral membrane proteins. This is ATP-dependent zinc metalloprotease FtsH from Karelsulcia muelleri (strain DMIN) (Sulcia muelleri).